The sequence spans 198 residues: Hookworm platelet inhibitor 1 (198 aa).

The N-terminal stretch at 1 to 17 is a signal peptide; sequence MSSYLLVLVAILGFAYA. Intrachain disulfides connect Cys24-Cys65, Cys78-Cys146, Cys141-Cys154, Cys174-Cys186, and Cys177-Cys195.

It belongs to the CRISP family. In terms of assembly, monomer. Detected in cephalic glands.

The protein localises to the secreted. Its function is as follows. Hookworms inhibitor of platelet aggregation and adhesion. Native protein inhibits platelet aggregation induced by ADP, epinephrine, and thrombin. In addition, it prevents adhesion of resting platelets to immobilized fibrinogen and collagen. May act by binding to glycoprotein IIb/IIIa (ITGA2B/ITGB3) and integrin alpha-2/beta-1 (ITGA1/ITGB1), respectively. It is noteworthy that the recombinant protein fails to inhibit binding to fibrinogen (through ITGA2B/ITGB3) and collagen (through ITGA1/ITGB1). This Ancylostoma caninum (Dog hookworm) protein is Hookworm platelet inhibitor 1.